Here is a 705-residue protein sequence, read N- to C-terminus: MRNGNLAGLLAEQASEAGWYDRPAFYAADVVTHGQIHDGAARLGEVLRNRGLSSGDRVLLCLPDSPDLVQLLLACLARGVMAFLANPELHRDDHALAARNTEPALVVTSDALRDRFQPSRVAEAAELMSEAARVAPGGYEPMGGDALAYATYTSGTTGPPKAAIHRHADPLTFVDAMCRKALRLTPEDTGLCSARMYFAYGLGNSVWFPLATGGSAVINSAPVTPEAAAILSARFGPSVLYGVPNFFARVIDSCSPDSFRSLRCVVSAGEALELGLAERLMEFFGGIPILDGIGSTEVGQTFVSNRVDEWRLGTLGRVLPPYEIRVVAPDGTTAGPGVEGDLWVRGPAIAKGYWNRPDSPVANEGWLDTRDRVCIDSDGWVTYRCRADDTEVIGGVNVDPREVERLIIEDEAVAEAAVVAVRESTGASTLQAFLVATSGATIDGSVMRDLHRGLLNRLSAFKVPHRFAVVDRLPRTPNGKLVRGALRKQSPTKPIWELSLTEPGSGVRAQRDDLSASNMTIAGGNDGGATLRERLVALRQERQRLVVDAVCAEAAKMLGEPDPWSVDQDLAFSELGFDSQMTVTLCKRLAAVTGLRLPETVGWDYGSISGLAQYLEAELAGGHGRLKSAGPVNSGATGLWAIEEQLNKVEELVAVIADGEKQRVADRLRALLGTIAGSEAGLGKLIQAASTPDEIFQLIDSELGK.

The Carrier domain maps to 541–619 (ERQRLVVDAV…GLAQYLEAEL (79 aa)). Ser-579 carries the post-translational modification O-(pantetheine 4'-phosphoryl)serine.

Belongs to the ATP-dependent AMP-binding enzyme family.

The enzyme catalyses holo-[4-hydroxyphenylalkanoate synthase] + 4-hydroxybenzoate + ATP = 4-hydroxyphenyl-[4-hydroxyphenylalkanoate synthase] + AMP + diphosphate. Its pathway is lipid metabolism; fatty acid biosynthesis. Its function is as follows. Catalyzes the adenylation of p-hydroxybenzoic acid (pHBA) to form p-hydroxybenzoic acid-AMP (pHBA-AMP), which is converted directly to p-hydroxybenzoyl-S-FadD22 (pHBA-S-FAdD22) thioester intermediate in a CoA-independent manner by attack of the phosphopantetheine thiol of FadD22. Usually, this intermediate primes the biosynthesis of the phenolphthiocerol (PPOL) by presenting the pHBA starter unit for elongation by Pks15/1, but M.tuberculosis lacks Pks15/1 due to a natural frameshift and thus is unable to produce PPOL. This Mycobacterium tuberculosis (strain CDC 1551 / Oshkosh) protein is p-hydroxybenzoic acid--AMP ligase FadD22 (fadD22).